Consider the following 460-residue polypeptide: Chromosomal replication initiator protein DnaA 1 (460 aa).

The interval 1 to 68 is domain I, interacts with DnaA modulators; it reads MRAWEEFLLL…KSGLVNNNNK (68 aa). The interval 68-102 is domain II; the sequence is KPIRVHVTSVDKAAPFYKEKQMQQEKTAYFTMHYG. Residues 103 to 321 are domain III, AAA+ region; sequence SVNPEMTFSN…HALNLLAKRV (219 aa). ATP-binding residues include Gly151, Gly153, Lys154, and Thr155. Residues 322-460 form a domain IV, binds dsDNA region; it reads MYKKLSHQLL…EFFPSEEMII (139 aa).

It belongs to the DnaA family. In terms of assembly, oligomerizes as a right-handed, spiral filament on DNA at oriC.

It is found in the cytoplasm. Its function is as follows. Plays an essential role in the initiation and regulation of chromosomal replication. ATP-DnaA binds to the origin of replication (oriC) to initiate formation of the DNA replication initiation complex once per cell cycle. Binds the DnaA box (a 9 base pair repeat at the origin) and separates the double-stranded (ds)DNA. Forms a right-handed helical filament on oriC DNA; dsDNA binds to the exterior of the filament while single-stranded (ss)DNA is stabiized in the filament's interior. The ATP-DnaA-oriC complex binds and stabilizes one strand of the AT-rich DNA unwinding element (DUE), permitting loading of DNA polymerase. After initiation quickly degrades to an ADP-DnaA complex that is not apt for DNA replication. Binds acidic phospholipids. This chain is Chromosomal replication initiator protein DnaA 1, found in Chlamydia pneumoniae (Chlamydophila pneumoniae).